The sequence spans 35 residues: Kappa-theraphotoxin-Tb1a (35 aa).

3 disulfide bridges follow: C3-C18, C10-C23, and C17-C30.

Belongs to the neurotoxin 10 (Hwtx-1) family. 59 (Tltx) subfamily. As to quaternary structure, monomer. As to expression, expressed by the venom gland.

It localises to the secreted. Functionally, blocks Kv4.2/KCND2 voltage-gated potassium channels (IC(50) is 193.0 nM) by shifting the voltage-dependence of channel activation to more depolarized potentials. The toxin is thought to bind to the S3-S4 linker region of the voltage sensor domain. This is Kappa-theraphotoxin-Tb1a from Theraphosa blondi (Goliath birdeating spider).